The sequence spans 199 residues: Chaperone protein TorD (199 aa).

This sequence belongs to the TorD/DmsD family. TorD subfamily.

It is found in the cytoplasm. Functionally, involved in the biogenesis of TorA. Acts on TorA before the insertion of the molybdenum cofactor and, as a result, probably favors a conformation of the apoenzyme that is competent for acquiring the cofactor. The sequence is that of Chaperone protein TorD from Escherichia coli O81 (strain ED1a).